Here is a 612-residue protein sequence, read N- to C-terminus: Alpha-glycerophosphate oxidase (612 aa).

Residue 21 to 49 participates in FAD binding; the sequence is DLLIIGGGITGAGVALQAAASGLDTGLIE. The segment covering 398 to 408 has biased composition (basic and acidic residues); sequence VETSTSEKELD. Positions 398–418 are disordered; sequence VETSTSEKELDPSAVSRGSSF.

Belongs to the FAD-dependent glycerol-3-phosphate dehydrogenase family. FAD is required as a cofactor.

The protein localises to the cytoplasm. The enzyme catalyses sn-glycerol 3-phosphate + O2 = dihydroxyacetone phosphate + H2O2. This Streptococcus pyogenes serotype M3 (strain ATCC BAA-595 / MGAS315) protein is Alpha-glycerophosphate oxidase (glpO).